Here is a 59-residue protein sequence, read N- to C-terminus: Large ribosomal subunit protein uL30 (59 aa).

Belongs to the universal ribosomal protein uL30 family. In terms of assembly, part of the 50S ribosomal subunit.

This Clostridium botulinum (strain ATCC 19397 / Type A) protein is Large ribosomal subunit protein uL30.